A 92-amino-acid polypeptide reads, in one-letter code: Small ribosomal subunit protein uS19 (92 aa).

The protein belongs to the universal ribosomal protein uS19 family.

Functionally, protein S19 forms a complex with S13 that binds strongly to the 16S ribosomal RNA. The protein is Small ribosomal subunit protein uS19 of Trichlorobacter lovleyi (strain ATCC BAA-1151 / DSM 17278 / SZ) (Geobacter lovleyi).